The following is a 320-amino-acid chain: o-succinylbenzoate synthase (320 aa).

The active-site Proton donor is Lys-133. Mg(2+)-binding residues include Asp-161, Glu-190, and Asp-213. The active-site Proton acceptor is Lys-235.

It belongs to the mandelate racemase/muconate lactonizing enzyme family. MenC type 1 subfamily. A divalent metal cation serves as cofactor.

It catalyses the reaction (1R,6R)-6-hydroxy-2-succinyl-cyclohexa-2,4-diene-1-carboxylate = 2-succinylbenzoate + H2O. It participates in quinol/quinone metabolism; 1,4-dihydroxy-2-naphthoate biosynthesis; 1,4-dihydroxy-2-naphthoate from chorismate: step 4/7. Its pathway is quinol/quinone metabolism; menaquinone biosynthesis. Functionally, converts 2-succinyl-6-hydroxy-2,4-cyclohexadiene-1-carboxylate (SHCHC) to 2-succinylbenzoate (OSB). This is o-succinylbenzoate synthase from Escherichia coli (strain SMS-3-5 / SECEC).